The primary structure comprises 134 residues: ATP synthase epsilon chain (134 aa).

Belongs to the ATPase epsilon chain family. As to quaternary structure, F-type ATPases have 2 components, CF(1) - the catalytic core - and CF(0) - the membrane proton channel. CF(1) has five subunits: alpha(3), beta(3), gamma(1), delta(1), epsilon(1). CF(0) has three main subunits: a, b and c.

The protein resides in the cell inner membrane. In terms of biological role, produces ATP from ADP in the presence of a proton gradient across the membrane. This Sinorhizobium medicae (strain WSM419) (Ensifer medicae) protein is ATP synthase epsilon chain.